Consider the following 548-residue polypeptide: MGRSKLASRPAEEDLNPGKSKRKKISLGPENAAASISTGIEAGNERKPGLYCCNYCDKDLSGLVRFKCAVCMDFDLCVECFSVGVELNRHKNSHPYRVMDNLSFSLVTSDWNADEEILLLEAIATYGFGNWKEVADHVGSKTTTECIKHFNSAYMQSPCFPLPDLSHTIGKSKDELLAMSKDSAVKTEIPAFVRLSPKEELPVSAEIKHEASGKVNEIDPPLSALAGVKKKGNVPQAKDIIKLEAAKQQSDRSVGEKKLRLPGEKVPLVTELYGYNLKREEFEIEHDNDAEQLLADMEFKDSDTDAEREQKLQVLRIYSKRLDERKRRKEFVLERNLLYPDQYEMSLSAEERKIYKSCKVFARFQSKEEHKELIKKVIEEHQILRRIEDLQEARTAGCRTTSDANRFIEEKRKKEAEESMLLRLNHGAPGSIAGKTLKSPRGLPRNLHPFGSDSLPKVTPPRIYSGLDTWDVDGLLGADLLSETEKKMCNETRILPVHYLKMLDILTREIKKGQIKKKSDAYSFFKVEPSKVDRVYDMLVHKGIGDST.

Positions 1–30 are disordered; that stretch reads MGRSKLASRPAEEDLNPGKSKRKKISLGPE. A ZZ-type zinc finger spans residues 48-104; it reads PGLYCCNYCDKDLSGLVRFKCAVCMDFDLCVECFSVGVELNRHKNSHPYRVMDNLSF. Zn(2+) is bound by residues cysteine 53, cysteine 56, cysteine 68, cysteine 71, cysteine 77, cysteine 80, histidine 90, and histidine 94. The SANT domain maps to 106–158; it reads LVTSDWNADEEILLLEAIATYGFGNWKEVADHVGSKTTTECIKHFNSAYMQSP. An N6-acetyllysine; by GCN5 modification is found at lysine 257. A coiled-coil region spans residues 365–386; it reads QSKEEHKELIKKVIEEHQILRR. The 88-residue stretch at 461–548 folds into the SWIRM domain; sequence PRIYSGLDTW…LVHKGIGDST (88 aa).

In terms of assembly, interacts in vitro with the HAT domain of GCN5 and with the DNA-binding domain of the transcriptional activator DREB1B/CBF1. Acetylated in vitro by GCN5, but acetylation is not essential for biological activity. As to expression, expressed in roots and leaves.

It localises to the nucleus. Required for the function of some acidic activation domains, which activate transcription from a distant site. The exact mechanism of action is not yet known. ADA2 stimulates the acetyltransferase activity of GCN5 on free histones or nucleosomes, probably by opening up the promoter region. This chain is Transcriptional adapter ADA2a (ADA2A), found in Arabidopsis thaliana (Mouse-ear cress).